Here is a 784-residue protein sequence, read N- to C-terminus: DNA repair and recombination protein RAD54-like (784 aa).

The tract at residues 1 to 50 is disordered; that stretch reads MRRSLAPSQRGPLRPESRHSFTPPLLKKNKRSCQQELEREQELDRKRQSA. The tract at residues 2-9 is required for chromatin remodeling, strand pairing activities and coupling of ATPase activity; that stretch reads RRSLAPSQ. Residue Ser20 is modified to Phosphoserine. Phosphothreonine is present on Thr22. A compositionally biased stretch (basic and acidic residues) spans 36–47; sequence ELEREQELDRKR. Residues 172–346 form the Helicase ATP-binding domain; that stretch reads EGKRGNFNGC…YSLVNFVNPE (175 aa). 185-192 serves as a coordination point for ATP; the sequence is DEMGLGKT. Residues 297 to 300 carry the DEGH box motif; it reads DEGH. Residues 503–660 enclose the Helicase C-terminal domain; the sequence is LLDFMLAAIR…NNESAEKHFT (158 aa). Residues 747–756 are compositionally biased toward low complexity; the sequence is VASAEEAASE. A disordered region spans residues 747-784; sequence VASAEEAASEQPEEKPDRRKRPSTPLSDDSADEDFLGF. The span at 775 to 784 shows a compositional bias: acidic residues; it reads DSADEDFLGF.

It belongs to the SNF2/RAD54 helicase family. As to quaternary structure, interacts (via N-terminus) with spn-A/Rad51.

The protein localises to the nucleus. Its function is as follows. Involved in mitotic DNA repair and meiotic recombination. Functions in the recombinational DNA repair pathway. Essential for interhomolog gene conversion (GC), but may have a less important role in intersister GC than spn-A/Rad51. In the presence of DNA, spn-A/Rad51 enhances the ATPase activity of okr/Rad54. The chain is DNA repair and recombination protein RAD54-like from Drosophila erecta (Fruit fly).